A 349-amino-acid chain; its full sequence is Hypoxia-inducible factor 1-alpha inhibitor (349 aa).

Residues 1 to 14 show a composition bias toward low complexity; it reads MAATAAEVAASGSG. Residues 1–51 are disordered; the sequence is MAATAAEVAASGSGEAREEAEAPGPAWDESQLRSYSFPTRPIPRLSQSDPR. Residue Ala2 is modified to N-acetylalanine. The interval 2–125 is interaction with VHL; that stretch reads AATAAEVAAS…PRSNREEIKF (124 aa). The JmjC domain maps to 142 to 307; sequence ERLYLQQTLN…KGAPTPKRIE (166 aa). Residue Tyr145 coordinates 2-oxoglutarate. Residues Asp152 and 181-183 contribute to the substrate site; that span reads QLT. Thr196 lines the 2-oxoglutarate pocket. His199 and Asp201 together coordinate Fe cation. Substrate is bound at residue 201-203; the sequence is DEQ. Residues Asn205 and Lys214 each coordinate 2-oxoglutarate. Position 238–239 (238–239) interacts with substrate; that stretch reads RQ. Residue His279 coordinates Fe cation. Asn294 contacts 2-oxoglutarate. Ala300 and Asn321 together coordinate substrate.

Homodimer; homodimerization is essential for catalytic activity. Interacts with VHL and HIF1A. Part of a complex with VHL, HIF1A and HDAC1 or HDAC2 or HDAC3. Interacts with NFKB1 and NFKBIA. Interacts with NOTCH1, NOTCH2 and NOTCH3 but not with NOTCH4. Interacts with ABPA3. Interacts with TNKS2. Interacts with PPP1R12A. Interacts with UBE3A. Interacts with ASB4. Interacts with ANKS3. Interacts with NECAB3; the interaction is indirect and seems to be mediated by APBA3. Fe(2+) serves as cofactor.

The protein localises to the nucleus. It is found in the cytoplasm. It localises to the perinuclear region. It catalyses the reaction L-asparaginyl-[hypoxia-inducible factor alpha subunit] + 2-oxoglutarate + O2 = (3S)-3-hydroxy-L-asparaginyl-[hypoxia-inducible factor alpha subunit] + succinate + CO2. The catalysed reaction is L-histidyl-[ankyrin-repeat domain protein] + 2-oxoglutarate + O2 = (3S)-3-hydroxy-L-histidyl-[ankyrin-repeat domain protein] + succinate + CO2. The enzyme catalyses L-asparaginyl-[ankyrin-repeat domain protein] + 2-oxoglutarate + O2 = (3S)-3-hydroxy-L-asparaginyl-[ankyrin-repeat domain protein] + succinate + CO2. It carries out the reaction L-aspartyl-[ankyrin-repeat domain protein] + 2-oxoglutarate + O2 = (3S)-3-hydroxy-L-aspartyl-[ankyrin-repeat domain protein] + succinate + CO2. In terms of biological role, hydroxylates HIF-1 alpha at 'Asn-799' in the C-terminal transactivation domain (CAD). Functions as an oxygen sensor and, under normoxic conditions, the hydroxylation prevents interaction of HIF-1 with transcriptional coactivators including Cbp/p300-interacting transactivator. Involved in transcriptional repression through interaction with HIF1A, VHL and histone deacetylases. Hydroxylates specific Asn residues within ankyrin repeat domains (ARD) of NFKB1, NFKBIA, NOTCH1, ASB4, PPP1R12A and several other ARD-containing proteins. Also hydroxylates Asp and His residues within ARDs of ANK1 and TNKS2, respectively. Negatively regulates NOTCH1 activity, accelerating myogenic differentiation. Positively regulates ASB4 activity, promoting vascular differentiation. This Mus musculus (Mouse) protein is Hypoxia-inducible factor 1-alpha inhibitor (Hif1an).